Consider the following 212-residue polypeptide: Histidine biosynthesis bifunctional protein HisIE (212 aa).

Residues 1–109 are phosphoribosyl-AMP cyclohydrolase; sequence MRPDFHKQEL…ELIPFDDSDI (109 aa). Residues 110–212 form a phosphoribosyl-ATP pyrophosphohydrolase region; it reads FSELEKQIID…KKEFHTRTAD (103 aa).

It in the N-terminal section; belongs to the PRA-CH family. In the C-terminal section; belongs to the PRA-PH family.

Its subcellular location is the cytoplasm. It catalyses the reaction 1-(5-phospho-beta-D-ribosyl)-ATP + H2O = 1-(5-phospho-beta-D-ribosyl)-5'-AMP + diphosphate + H(+). The catalysed reaction is 1-(5-phospho-beta-D-ribosyl)-5'-AMP + H2O = 1-(5-phospho-beta-D-ribosyl)-5-[(5-phospho-beta-D-ribosylamino)methylideneamino]imidazole-4-carboxamide. The protein operates within amino-acid biosynthesis; L-histidine biosynthesis; L-histidine from 5-phospho-alpha-D-ribose 1-diphosphate: step 2/9. It functions in the pathway amino-acid biosynthesis; L-histidine biosynthesis; L-histidine from 5-phospho-alpha-D-ribose 1-diphosphate: step 3/9. This is Histidine biosynthesis bifunctional protein HisIE (hisI) from Lactococcus lactis subsp. lactis (strain IL1403) (Streptococcus lactis).